We begin with the raw amino-acid sequence, 314 residues long: DNA-directed RNA polymerase subunit alpha (314 aa).

The segment at 1–228 is alpha N-terminal domain (alpha-NTD); the sequence is MIEIEKPKIE…EHLNIFVGLT (228 aa). The tract at residues 245 to 314 is alpha C-terminal domain (alpha-CTD); it reads KEKVLEMTIE…ELGLGLRKDD (70 aa).

Belongs to the RNA polymerase alpha chain family. As to quaternary structure, homodimer. The RNAP catalytic core consists of 2 alpha, 1 beta, 1 beta' and 1 omega subunit. When a sigma factor is associated with the core the holoenzyme is formed, which can initiate transcription.

It catalyses the reaction RNA(n) + a ribonucleoside 5'-triphosphate = RNA(n+1) + diphosphate. Its function is as follows. DNA-dependent RNA polymerase catalyzes the transcription of DNA into RNA using the four ribonucleoside triphosphates as substrates. This is DNA-directed RNA polymerase subunit alpha from Bacillus thuringiensis (strain Al Hakam).